Consider the following 30-residue polypeptide: Trypsin inhibitor 2 (30 aa).

3 disulfide bridges follow: Cys2–Cys19, Cys9–Cys21, and Cys15–Cys27.

Belongs to the protease inhibitor I7 (squash-type serine protease inhibitor) family.

It localises to the secreted. In terms of biological role, inhibits trypsin. In Ecballium elaterium (Squirting cucumber), this protein is Trypsin inhibitor 2.